Reading from the N-terminus, the 332-residue chain is MTKYNSGSSEMPAAQTIKQEYHNGYGQPTHPGYGFSAYSQQNPIAHPGQNPHQTLQNFFSRFNAVGDASAGNGGAASISANGSGSSCNYSHANHHPAELDKPLGMNMTPSPIYTTDYDDENSSLSSEEHVLAPLVCSSAQSSRPCLTWACKACKKKSVTVDRRKAATMRERRRLRKVNEAFEILKRRTSSNPNQRLPKVEILRNAIEYIESLEDLLQESSTTRDGDNLAPSLSGKSCQSDYLSSYAGAYLEDKLSFYNKHMEKYGQFTDFDGNANGSSLDCLNLIVQSINKSTTSPIQNKATPSASDTQSPPSSGATAPTSLHVNFKRKCST.

A disordered region spans residues 22 to 54; it reads HNGYGQPTHPGYGFSAYSQQNPIAHPGQNPHQT. One can recognise a bHLH domain in the interval 161 to 212; the sequence is DRRKAATMRERRRLRKVNEAFEILKRRTSSNPNQRLPKVEILRNAIEYIESL. Positions 293–309 are enriched in polar residues; it reads TTSPIQNKATPSASDTQ. The segment at 293-332 is disordered; that stretch reads TTSPIQNKATPSASDTQSPPSSGATAPTSLHVNFKRKCST. The segment covering 310 to 321 has biased composition (low complexity); sequence SPPSSGATAPTS.

In terms of assembly, efficient DNA binding requires dimerization with another bHLH protein.

The protein localises to the nucleus. Functionally, may play an important role in the early development of muscle. The polypeptide is Myogenic-determination protein (nau) (Drosophila melanogaster (Fruit fly)).